A 361-amino-acid chain; its full sequence is Zygote arrest protein 1 (361 aa).

Disordered stretches follow at residues 68 to 129 (GPRP…PRSW) and 142 to 252 (GLSS…EQDK). Residues 116–128 (PRSPARAGRPPRS) show a composition bias toward low complexity. T155 carries the phosphothreonine modification. The segment covering 238-252 (ASRDRASPQSTEQDK) has biased composition (basic and acidic residues). The 3CxxC-type zinc finger occupies 263 to 346 (KYGYYHCKDC…RQDLCGRCKD (84 aa)).

This sequence belongs to the ZAR1 family. Interacts with YBX2. Post-translationally, phosphorylation by CDK1 does not regulate formation of MARDO (mitochondria-associated ribonucleoprotein domain) membraneless compartment. In terms of processing, ubiquitinated and degradaded by the proteasome during oocyte meiotic maturation, leading to MARDO (mitochondria-associated ribonucleoprotein domain) membraneless compartment dissolution.

Its subcellular location is the cytoplasm. The protein resides in the cytoplasmic ribonucleoprotein granule. MRNA-binding protein that mediates formation of MARDO (mitochondria-associated ribonucleoprotein domain), a membraneless compartment that stores maternal mRNAs in oocytes. MARDO assembly around mitochondria is directed by an increase in mitochondrial membrane potential during oocyte growth. Promotes formation of MARDO phase-separated membraneless compartment by undergoing liquid-liquid phase separation upon binding to maternal mRNAs. Binds to the 3'-UTR of maternal mRNAs. Maternal mRNAs stored in the MARDO are translationally repressed. Essential for female fertility and oocyte-to-embryo transition by coordinating maternal mRNA storage, translation and degradation. This Rattus norvegicus (Rat) protein is Zygote arrest protein 1.